The following is a 460-amino-acid chain: Chromosomal replication initiator protein DnaA (460 aa).

The tract at residues 1 to 91 (MSLINPKVSA…LLWQNEDKSI (91 aa)) is domain I, interacts with DnaA modulators. Positions 91–122 (ICSIDIQVTEEKNSSSSIISKNKEESVNNLGS) are domain II. The domain III, AAA+ region stretch occupies residues 123-342 (PLDPRFTFDN…GALNKVAHTS (220 aa)). Positions 169, 171, 172, and 173 each coordinate ATP. Residues 343–460 (LIGRSMTVES…EINQLRKMFK (118 aa)) are domain IV, binds dsDNA.

This sequence belongs to the DnaA family. Oligomerizes as a right-handed, spiral filament on DNA at oriC.

Its subcellular location is the cytoplasm. Its function is as follows. Plays an essential role in the initiation and regulation of chromosomal replication. ATP-DnaA binds to the origin of replication (oriC) to initiate formation of the DNA replication initiation complex once per cell cycle. Binds the DnaA box (a 9 base pair repeat at the origin) and separates the double-stranded (ds)DNA. Forms a right-handed helical filament on oriC DNA; dsDNA binds to the exterior of the filament while single-stranded (ss)DNA is stabiized in the filament's interior. The ATP-DnaA-oriC complex binds and stabilizes one strand of the AT-rich DNA unwinding element (DUE), permitting loading of DNA polymerase. After initiation quickly degrades to an ADP-DnaA complex that is not apt for DNA replication. Binds acidic phospholipids. This is Chromosomal replication initiator protein DnaA from Wolbachia sp. subsp. Brugia malayi (strain TRS).